Here is a 181-residue protein sequence, read N- to C-terminus: Isopentenyl-diphosphate Delta-isomerase (181 aa).

Mn(2+) contacts are provided by H25 and H32. One can recognise a Nudix hydrolase domain in the interval 30–164 (PLHLAFSCWL…PWAFSPWMVM (135 aa)). C67 is a catalytic residue. H69 is a binding site for Mn(2+). E87 serves as a coordination point for Mg(2+). E114 and E116 together coordinate Mn(2+). The active site involves E116.

The protein belongs to the IPP isomerase type 1 family. In terms of assembly, homodimer. Mg(2+) serves as cofactor. Mn(2+) is required as a cofactor.

The protein resides in the cytoplasm. The catalysed reaction is isopentenyl diphosphate = dimethylallyl diphosphate. It participates in isoprenoid biosynthesis; dimethylallyl diphosphate biosynthesis; dimethylallyl diphosphate from isopentenyl diphosphate: step 1/1. Catalyzes the 1,3-allylic rearrangement of the homoallylic substrate isopentenyl (IPP) to its highly electrophilic allylic isomer, dimethylallyl diphosphate (DMAPP). The chain is Isopentenyl-diphosphate Delta-isomerase from Salmonella agona (strain SL483).